The primary structure comprises 1208 residues: DNA-directed RNA polymerase subunit beta (1208 aa).

It belongs to the RNA polymerase beta chain family. The RNAP catalytic core consists of 2 alpha, 1 beta, 1 beta' and 1 omega subunit. When a sigma factor is associated with the core the holoenzyme is formed, which can initiate transcription.

The enzyme catalyses RNA(n) + a ribonucleoside 5'-triphosphate = RNA(n+1) + diphosphate. Functionally, DNA-dependent RNA polymerase catalyzes the transcription of DNA into RNA using the four ribonucleoside triphosphates as substrates. The chain is DNA-directed RNA polymerase subunit beta from Enterococcus faecium (Streptococcus faecium).